We begin with the raw amino-acid sequence, 66 residues long: Large ribosomal subunit protein bL35 (66 aa).

This sequence belongs to the bacterial ribosomal protein bL35 family.

This is Large ribosomal subunit protein bL35 from Deinococcus deserti (strain DSM 17065 / CIP 109153 / LMG 22923 / VCD115).